An 855-amino-acid chain; its full sequence is Zinc finger protein 814 (855 aa).

The KRAB domain occupies 15–91 (VTFEDVAVNF…PMAGVSPKKA (77 aa)). The C2H2-type 1; degenerate zinc finger occupies 120–142 (HRCEAWGNKLYDSGNFHQHQNEH). 22 C2H2-type zinc fingers span residues 242–264 (YVCCECGKSFSKYASLSNHQRVH), 269–291 (HECGECGKSFSKYVSFSNHQRVH), 296–318 (HECGECGKSFSKYVSFSNHQRVH), 324–346 (YECGECGKSFSKYASFSNHQRVH), 352–374 (YECGECGKSFSKYVSFSNHQRVH), 380–402 (YECGECGKSFSKYASFSNHQRVH), 408–430 (YECGECGKSFSQKSSLIQHQRFH), 436–458 (YGCEECGKSFSSEGHLRSHQRVH), 464–486 (FKCGECVKSFSHKRSLVHHQRVH), 492–514 (YQCGECGKSFSQKGNLVLHQRVH), 520–542 (YECGECGKSFSSKGHLRNHQQIH), 548–570 (YECGECGKSFSHKGTLILHQRVH), 576–598 (YGCGECGKSFSSIGHLRSHQRVH), 604–626 (YECGECGKSFSHKRSLVHHQRMH), 632–654 (YKCGDCGKSFNEKGHLRNHQRVH), 660–682 (FKCGECGKCFSHKGNLILHQHGH), 688–710 (YVCRECGKLFKKKSHLLVHQRIH), 716–738 (YACEACQKFFRNKYQLIAHQRVH), 744–766 (YECNDCGKSFTHSSTFCVHKRIH), 772–794 (YECSECGKSFAESSSFTKHKRVH), 800–822 (YECSECGKSFAESSSLTKHKRVH), and 828–850 (YKCEKCGKLFNKKSHLLVHQSSH). Lys335 participates in a covalent cross-link: Glycyl lysine isopeptide (Lys-Gly) (interchain with G-Cter in SUMO2). Lys391 is covalently cross-linked (Glycyl lysine isopeptide (Lys-Gly) (interchain with G-Cter in SUMO2)).

The sequence is that of Zinc finger protein 814 (ZNF814) from Homo sapiens (Human).